We begin with the raw amino-acid sequence, 449 residues long: uncharacterized protein (449 aa).

A compositionally biased stretch (basic residues) spans 1-13 (MPKAPKTKLHHAP). Positions 1-125 (MPKAPKTKLH…SQEEEEYEEL (125 aa)) are disordered. Residue serine 22 is modified to Phosphoserine. Residues 73-84 (KPSQISAFISNG) are compositionally biased toward polar residues. The residue at position 156 (serine 156) is a Phosphoserine.

The protein belongs to the bystin family.

This is an uncharacterized protein from Schizosaccharomyces pombe (strain 972 / ATCC 24843) (Fission yeast).